We begin with the raw amino-acid sequence, 180 residues long: Large ribosomal subunit protein uL5 (180 aa).

This sequence belongs to the universal ribosomal protein uL5 family. Part of the 50S ribosomal subunit; part of the 5S rRNA/L5/L18/L25 subcomplex. Contacts the 5S rRNA and the P site tRNA. Forms a bridge to the 30S subunit in the 70S ribosome.

Its function is as follows. This is one of the proteins that bind and probably mediate the attachment of the 5S RNA into the large ribosomal subunit, where it forms part of the central protuberance. In the 70S ribosome it contacts protein S13 of the 30S subunit (bridge B1b), connecting the 2 subunits; this bridge is implicated in subunit movement. Contacts the P site tRNA; the 5S rRNA and some of its associated proteins might help stabilize positioning of ribosome-bound tRNAs. The chain is Large ribosomal subunit protein uL5 from Cupriavidus metallidurans (strain ATCC 43123 / DSM 2839 / NBRC 102507 / CH34) (Ralstonia metallidurans).